We begin with the raw amino-acid sequence, 269 residues long: Membrane protein insertase YidC 1 (269 aa).

The N-terminal stretch at 1–20 is a signal peptide; that stretch reads MKKKFSLIAMAGAALLLLTA. Cysteine 21 is lipidated: N-palmitoyl cysteine. Cysteine 21 carries S-diacylglycerol cysteine lipidation. The next 4 helical transmembrane spans lie at 45–65, 124–144, 165–185, and 203–223; these read IRFL…TIVI, YMGC…YQAL, PTFI…YLMM, and PIFI…YWVI.

It belongs to the OXA1/ALB3/YidC family. Type 2 subfamily.

It is found in the cell membrane. In terms of biological role, required for the insertion and/or proper folding and/or complex formation of integral membrane proteins into the membrane. Involved in integration of membrane proteins that insert both dependently and independently of the Sec translocase complex, as well as at least some lipoproteins. The chain is Membrane protein insertase YidC 1 from Lactococcus lactis subsp. lactis (strain IL1403) (Streptococcus lactis).